We begin with the raw amino-acid sequence, 73 residues long: Large ribosomal subunit protein bL31 (73 aa).

This sequence belongs to the bacterial ribosomal protein bL31 family. Type A subfamily. Part of the 50S ribosomal subunit.

Its function is as follows. Binds the 23S rRNA. The sequence is that of Large ribosomal subunit protein bL31 from Agrobacterium fabrum (strain C58 / ATCC 33970) (Agrobacterium tumefaciens (strain C58)).